We begin with the raw amino-acid sequence, 365 residues long: tRNA N6-adenosine threonylcarbamoyltransferase (365 aa).

Residues His119 and His123 each coordinate Fe cation. Residues 141-145 (LVSGG), Asp174, Gly187, and Asn288 each bind substrate. Residue Asp316 participates in Fe cation binding.

This sequence belongs to the KAE1 / TsaD family. Requires Fe(2+) as cofactor.

It localises to the cytoplasm. The enzyme catalyses L-threonylcarbamoyladenylate + adenosine(37) in tRNA = N(6)-L-threonylcarbamoyladenosine(37) in tRNA + AMP + H(+). Its function is as follows. Required for the formation of a threonylcarbamoyl group on adenosine at position 37 (t(6)A37) in tRNAs that read codons beginning with adenine. Is involved in the transfer of the threonylcarbamoyl moiety of threonylcarbamoyl-AMP (TC-AMP) to the N6 group of A37, together with TsaE and TsaB. TsaD likely plays a direct catalytic role in this reaction. This chain is tRNA N6-adenosine threonylcarbamoyltransferase, found in Rhizobium leguminosarum bv. trifolii (strain WSM2304).